We begin with the raw amino-acid sequence, 426 residues long: Meiotically up-regulated gene 170 protein (426 aa).

It belongs to the arrestin family.

It is found in the cytoplasm. The protein resides in the nucleus. Has a role in meiosis. The sequence is that of Meiotically up-regulated gene 170 protein (mug170) from Schizosaccharomyces pombe (strain 972 / ATCC 24843) (Fission yeast).